The sequence spans 278 residues: Urease accessory protein UreD (278 aa).

It belongs to the UreD family. UreD, UreF and UreG form a complex that acts as a GTP-hydrolysis-dependent molecular chaperone, activating the urease apoprotein by helping to assemble the nickel containing metallocenter of UreC. The UreE protein probably delivers the nickel.

It localises to the cytoplasm. In terms of biological role, required for maturation of urease via the functional incorporation of the urease nickel metallocenter. This Leptothrix cholodnii (strain ATCC 51168 / LMG 8142 / SP-6) (Leptothrix discophora (strain SP-6)) protein is Urease accessory protein UreD.